The following is a 123-amino-acid chain: Small ribosomal subunit protein uS12 (123 aa).

The interval 1-22 (MATINQLVRQPRKRSVEKSDVP) is disordered. Asp-89 is modified (3-methylthioaspartic acid). The interval 100–123 (GSLDTSGVKGRNQGRSKYGTKRPK) is disordered. Positions 111 to 123 (NQGRSKYGTKRPK) are enriched in basic residues.

Belongs to the universal ribosomal protein uS12 family. As to quaternary structure, part of the 30S ribosomal subunit. Contacts proteins S8 and S17. May interact with IF1 in the 30S initiation complex.

Functionally, with S4 and S5 plays an important role in translational accuracy. In terms of biological role, interacts with and stabilizes bases of the 16S rRNA that are involved in tRNA selection in the A site and with the mRNA backbone. Located at the interface of the 30S and 50S subunits, it traverses the body of the 30S subunit contacting proteins on the other side and probably holding the rRNA structure together. The combined cluster of proteins S8, S12 and S17 appears to hold together the shoulder and platform of the 30S subunit. The polypeptide is Small ribosomal subunit protein uS12 (Pseudomonas entomophila (strain L48)).